Reading from the N-terminus, the 338-residue chain is tRNA N6-adenosine threonylcarbamoyltransferase (338 aa).

Residues His111 and His115 each contribute to the Fe cation site. Substrate contacts are provided by residues 134 to 138, Asp167, Gly180, Asp184, and Asn272; that span reads VVSGG. Residue Asp300 participates in Fe cation binding.

This sequence belongs to the KAE1 / TsaD family. It depends on Fe(2+) as a cofactor.

The protein resides in the cytoplasm. It carries out the reaction L-threonylcarbamoyladenylate + adenosine(37) in tRNA = N(6)-L-threonylcarbamoyladenosine(37) in tRNA + AMP + H(+). Its function is as follows. Required for the formation of a threonylcarbamoyl group on adenosine at position 37 (t(6)A37) in tRNAs that read codons beginning with adenine. Is involved in the transfer of the threonylcarbamoyl moiety of threonylcarbamoyl-AMP (TC-AMP) to the N6 group of A37, together with TsaE and TsaB. TsaD likely plays a direct catalytic role in this reaction. The sequence is that of tRNA N6-adenosine threonylcarbamoyltransferase from Syntrophus aciditrophicus (strain SB).